The following is a 925-amino-acid chain: GPI ethanolamine phosphate transferase 1 (925 aa).

Over methionine 1–arginine 6 the chain is Cytoplasmic. Residues leucine 7–isoleucine 27 form a helical membrane-spanning segment. At tyrosine 28 to serine 457 the chain is on the lumenal side. N-linked (GlcNAc...) asparagine glycans are attached at residues asparagine 90, asparagine 138, asparagine 198, asparagine 286, asparagine 312, and asparagine 358. The chain crosses the membrane as a helical span at residues isoleucine 458 to phenylalanine 478. Topologically, residues isoleucine 479–asparagine 492 are cytoplasmic. A helical membrane pass occupies residues leucine 493–glutamine 510. Residues arginine 511–tyrosine 516 lie on the Lumenal side of the membrane. Residues tyrosine 517–leucine 537 traverse the membrane as a helical segment. Topologically, residues histidine 538–glycine 547 are cytoplasmic. The chain crosses the membrane as a helical span at residues valine 548–valine 568. Residues tyrosine 569–arginine 574 lie on the Lumenal side of the membrane. The helical transmembrane segment at tryptophan 575–aspartate 595 threads the bilayer. The Cytoplasmic segment spans residues alanine 596–asparagine 599. Residues methionine 600–isoleucine 620 traverse the membrane as a helical segment. Position 621 (glutamate 621) is a topological domain, lumenal. The chain crosses the membrane as a helical span at residues serine 622 to tryptophan 642. Topologically, residues arginine 643–lysine 653 are cytoplasmic. A helical membrane pass occupies residues isoleucine 654–valine 674. At threonine 675–alanine 687 the chain is on the lumenal side. Residues lysine 688–leucine 708 traverse the membrane as a helical segment. Residues lysine 709 to leucine 719 are Cytoplasmic-facing. Residues valine 720 to phenylalanine 740 form a helical membrane-spanning segment. The Lumenal portion of the chain corresponds to tyrosine 741–arginine 775. The helical transmembrane segment at isoleucine 776–serine 796 threads the bilayer. Residues isoleucine 797 to glycine 818 are Cytoplasmic-facing. The chain crosses the membrane as a helical span at residues alanine 819–methionine 839. Residues asparagine 840 to tyrosine 848 lie on the Lumenal side of the membrane. Residues threonine 849–leucine 869 form a helical membrane-spanning segment. The Cytoplasmic segment spans residues arginine 870–tyrosine 885. A helical membrane pass occupies residues cysteine 886–leucine 906. Residues lysine 907 to histidine 925 lie on the Lumenal side of the membrane.

Belongs to the PIGG/PIGN/PIGO family. PIGN subfamily.

It is found in the endoplasmic reticulum membrane. It participates in glycolipid biosynthesis; glycosylphosphatidylinositol-anchor biosynthesis. Its function is as follows. Ethanolamine phosphate transferase involved in glycosylphosphatidylinositol-anchor biosynthesis. Transfers ethanolamine phosphate to the first alpha-1,4-linked mannose of the glycosylphosphatidylinositol precursor of GPI-anchor. The sequence is that of GPI ethanolamine phosphate transferase 1 (MCD4) from Eremothecium gossypii (strain ATCC 10895 / CBS 109.51 / FGSC 9923 / NRRL Y-1056) (Yeast).